A 403-amino-acid polypeptide reads, in one-letter code: Lipase lipl-5 (403 aa).

A signal peptide spans 1 to 18 (MWRFAVFLAAFFVQDVVG). The N-linked (GlcNAc...) asparagine glycan is linked to asparagine 64. Catalysis depends on serine 167, which acts as the Nucleophile. Asparagine 271 is a glycosylation site (N-linked (GlcNAc...) asparagine). Residues aspartate 343 and histidine 375 each act as charge relay system in the active site.

Belongs to the AB hydrolase superfamily. Lipase family.

The protein localises to the lysosome lumen. The protein resides in the secreted. Its function is as follows. Lipase involved in lipid homeostasis. Regulates mitochondrial lipid composition, in particular cardiolipins and coenzyme Q-9 levels, in response to nutrient availability. Does not affect global triglyceride levels in response to nutrient availability. However, in coelomocytes, specifically promotes triglyceride catabolism and lifespan extension in response to nutrient deprivation. This chain is Lipase lipl-5, found in Caenorhabditis elegans.